The primary structure comprises 427 residues: MAQVCSISVNHRHAGIEGIERARFRDPDVAMLRLLSLPGVSEAVVLQTCNRVEIYAVAESVEDIVGFARAEGMPLEIAEVRAGDDCLKGLLRLACGLESMIVGEDQILGQLKTALLQARRLGTIGPVLSTAIQKSIHVGARARIETEINKGSVSIGSAAVELAESLLGDLRGRTILVVGAGEMGTLVANAMAEKSLRAIYVANRTFEQAEKLASSLQGVAIRLERLCDYMGSADVVICATGAPHLIITKKMVEQCKGEKPLIFIDITNPRNIEETVGEVPGVTLHNIDSLRQINEASMRRRQGEARKVEAIIEEELVLLQRDIRRLHADRVIGDLYQRTDHIRATELRRAVARLSTAGSLTEQQISILHDFSMALTNKILAAPTRQLRRAAERCDEDCLRTAEELFDLWVEESNGIPGNKTKASKTD.

Substrate contacts are provided by residues 48-51 (TCNR), serine 99, 104-106 (EDQ), and glutamine 110. The active-site Nucleophile is the cysteine 49. 179–184 (GAGEMG) is a binding site for NADP(+).

Belongs to the glutamyl-tRNA reductase family. As to quaternary structure, homodimer.

It carries out the reaction (S)-4-amino-5-oxopentanoate + tRNA(Glu) + NADP(+) = L-glutamyl-tRNA(Glu) + NADPH + H(+). It functions in the pathway porphyrin-containing compound metabolism; protoporphyrin-IX biosynthesis; 5-aminolevulinate from L-glutamyl-tRNA(Glu): step 1/2. In terms of biological role, catalyzes the NADPH-dependent reduction of glutamyl-tRNA(Glu) to glutamate 1-semialdehyde (GSA). The protein is Glutamyl-tRNA reductase of Methanocella arvoryzae (strain DSM 22066 / NBRC 105507 / MRE50).